A 277-amino-acid chain; its full sequence is MLSIKEATKNISQQLTTVSKTPRLDAELLLECVLKKSRADLFAYPEIQLNSSQQKTLSAYVKRRLKGEPIAYILGQKEFWSLNLKVTPDVLIPRPETEMLVEWILKNLPKDEKLRIADLGTGSGAVALAIAVERPHWTIDATDNSQAALKIAEINAKQHEIKNCNFYHGEWCQALPRRDYHAIVGNPPYIPDKDQHLQQLKHEPREALAAGSDGLSAIKIIIHEAKSYLVNGGWLLLEHGYDQAEKIMTLMQADGYREITDRRDLAGLSRMMVARRG.

Residues 120–124 (GTGSG), Asp143, Trp171, and Asn186 each bind S-adenosyl-L-methionine. 186-189 (NPPY) is a substrate binding site.

The protein belongs to the protein N5-glutamine methyltransferase family. PrmC subfamily.

It catalyses the reaction L-glutaminyl-[peptide chain release factor] + S-adenosyl-L-methionine = N(5)-methyl-L-glutaminyl-[peptide chain release factor] + S-adenosyl-L-homocysteine + H(+). In terms of biological role, methylates the class 1 translation termination release factors RF1/PrfA and RF2/PrfB on the glutamine residue of the universally conserved GGQ motif. The protein is Release factor glutamine methyltransferase of Coxiella burnetii (strain RSA 493 / Nine Mile phase I).